The sequence spans 485 residues: Bifunctional protein HldE (485 aa).

Residues 1 to 326 (MDFSSTRVLC…AELDESAISN (326 aa)) are ribokinase. Residue 195–198 (NVKE) participates in ATP binding. Asp-271 is an active-site residue. Residues 354-485 (FTNGCFDILH…GIVKKISTLT (132 aa)) are cytidylyltransferase.

The protein in the N-terminal section; belongs to the carbohydrate kinase PfkB family. It in the C-terminal section; belongs to the cytidylyltransferase family. As to quaternary structure, homodimer.

It carries out the reaction D-glycero-beta-D-manno-heptose 7-phosphate + ATP = D-glycero-beta-D-manno-heptose 1,7-bisphosphate + ADP + H(+). It catalyses the reaction D-glycero-beta-D-manno-heptose 1-phosphate + ATP + H(+) = ADP-D-glycero-beta-D-manno-heptose + diphosphate. It participates in nucleotide-sugar biosynthesis; ADP-L-glycero-beta-D-manno-heptose biosynthesis; ADP-L-glycero-beta-D-manno-heptose from D-glycero-beta-D-manno-heptose 7-phosphate: step 1/4. Its pathway is nucleotide-sugar biosynthesis; ADP-L-glycero-beta-D-manno-heptose biosynthesis; ADP-L-glycero-beta-D-manno-heptose from D-glycero-beta-D-manno-heptose 7-phosphate: step 3/4. Its function is as follows. Catalyzes the phosphorylation of D-glycero-D-manno-heptose 7-phosphate at the C-1 position to selectively form D-glycero-beta-D-manno-heptose-1,7-bisphosphate. Catalyzes the ADP transfer from ATP to D-glycero-beta-D-manno-heptose 1-phosphate, yielding ADP-D-glycero-beta-D-manno-heptose. This Granulibacter bethesdensis (strain ATCC BAA-1260 / CGDNIH1) protein is Bifunctional protein HldE.